Here is a 192-residue protein sequence, read N- to C-terminus: ADP-ribose glycohydrolase AF_1521 (192 aa).

Residues methionine 1 to leucine 192 form the Macro domain. Substrate-binding positions include glycine 19–isoleucine 21, alanine 32–asparagine 34, histidine 39–alanine 44, and valine 140–glycine 146.

It carries out the reaction 5-O-(ADP-D-ribosyl)-L-glutamyl-[protein] + H2O = L-glutamyl-[protein] + ADP-D-ribose + H(+). The enzyme catalyses 4-O-(ADP-D-ribosyl)-L-aspartyl-[protein] + H2O = L-aspartyl-[protein] + ADP-D-ribose + H(+). It catalyses the reaction alpha-NAD(+) + H2O = ADP-D-ribose + nicotinamide + H(+). Removes ADP-ribose from aspartate and glutamate residues in proteins bearing a single ADP-ribose moiety. Inactive towards proteins bearing poly-ADP-ribose. Catalyzes removal of a phosphate group from ADP-ribose 1''-phosphate (Appr1p), but with low efficiency. This is ADP-ribose glycohydrolase AF_1521 from Archaeoglobus fulgidus (strain ATCC 49558 / DSM 4304 / JCM 9628 / NBRC 100126 / VC-16).